Reading from the N-terminus, the 1424-residue chain is MRDIQDFDSLMIRLASPDTIRAWSYGEVKKPETINYRTLRPERDGLFCERIFGTTKEWECFCGKFKSIRYKGVICDRCGVEVTHFKVRRERMGHIELAAPVSHIWYYRSVPSRMGLLLNLQVAALRSVLYYEKYIVIDANDTDLEPMQLLTEDEYRDAHERYGAAFTAGMGAGAIKTLLQNINLDELAAQLRAKMIEKGAKSDQRLLRRIEIVENFRASGNKPEWMILDVIPVIPPDLRPMVQLDGGRFATSDLNDLYRRVIHRNSRLSKLMELKAPDIIIRNEKRMLQEAVDALFDNSKRKKAIKGASNRPLKSISDLLKGKQGRFRQNLLGKRVDYSGRSVIVVGPELKLWQCGLPTKMALELFKPFIMKKLVQKEVVSNIKKAKLLVEQEAAEVFAVLDEVVSEHPVLLNRAPTLHRLGIQAFEPVLVEGKAIRLHPLVCKAFNADFDGDQMAIHVPLTQAAQMECWTLMLSARNLLDPANGKTIVFPTQDMVLGLYYLTKERALPEGKKERLYSSVPEVLMAAECHAVGWQEPVLIDYETEPGKIETVRTTPGRILFNEEMPEGVPFTNYALNDKKIRKLIENVFKDKGPWLAVQLLDKLKAVGYKYATYFGATLSMEDMIIPPEKAGMLEKANKEVLEIYNQYKGGHITQEERYNRVVDVWQKTNSNLKEILMKRLQEDKGGFNTIHMMETSGARGSKDQINQLAGMRGLMSKPTGDIIELPIRSNFKEGLNVMEFFISTNGARKGLTDTALKTSDAGYLTRRLVDIAQNVVVNEEDCGTINGIEYAAIKRGDEIRESLSERIAGKYTLERVIHPITGELLIDVNEYITDETAKKIEEAGVETVKLRTVLTCESKHGVCVKCYGRDLARNRIVRIGEAVGIIAAQSIGQPGTQLTMRTFHEGGTASKNVEENRIVFNDYSIIVRGIKGSYVTLKNGHFLFTRKGEFTFSRVLNEYALKKGETALVSTGTRVVKGNPLYTLKNGKEVLSENIAIAEVRDNIIYLTGQEQTIEIRNGSEVVVKENDVIKAGETVGTFDPFADPILAEYDGFVRFEDILPGTTLKEEADEETGVVEKRISDAHFDKMQPRIFISDESGNTVGEDSYFLPGGAQLLVEEGQEIKAGAILAKIAKESVKTKDITGGLPRVSELLEARRPKSPAVLAAIAGVVTIKKGLLKGKRTIMVRDEYGHDVKHLVPIGKRMLVRDGDTVKAGEPLCDGSFDPHDILNILGENALQNYLMKEIKEVYDAQGVTINDKHVGIIVRQMLRKVKIVSVGDTKFIFDQQIDKYRFHEENKRVKEEGGQPAVARPMFQGITKAALNIDSFISAASFQETTKVLTNAAIAGSSDELRGLKENVIIGHLIPAGTGMKQYRDIKLFDKNKSDLDIQMNEILERRRLEAEAAQALEEKELIEEENFLDDL.

Positions 60, 62, 75, and 78 each coordinate Zn(2+). Positions 449, 451, and 453 each coordinate Mg(2+). Zn(2+)-binding residues include cysteine 783, cysteine 857, cysteine 864, and cysteine 867.

The protein belongs to the RNA polymerase beta' chain family. In terms of assembly, the RNAP catalytic core consists of 2 alpha, 1 beta, 1 beta' and 1 omega subunit. When a sigma factor is associated with the core the holoenzyme is formed, which can initiate transcription. It depends on Mg(2+) as a cofactor. Zn(2+) serves as cofactor.

It catalyses the reaction RNA(n) + a ribonucleoside 5'-triphosphate = RNA(n+1) + diphosphate. In terms of biological role, DNA-dependent RNA polymerase catalyzes the transcription of DNA into RNA using the four ribonucleoside triphosphates as substrates. The sequence is that of DNA-directed RNA polymerase subunit beta' from Treponema denticola (strain ATCC 35405 / DSM 14222 / CIP 103919 / JCM 8153 / KCTC 15104).